A 156-amino-acid chain; its full sequence is 6,7-dimethyl-8-ribityllumazine synthase (156 aa).

5-amino-6-(D-ribitylamino)uracil contacts are provided by residues phenylalanine 22, 57 to 59, and 81 to 83; these read AVE and SVI. Position 86-87 (86-87) interacts with (2S)-2-hydroxy-3-oxobutyl phosphate; that stretch reads GT. The active-site Proton donor is the histidine 89. Residue phenylalanine 114 coordinates 5-amino-6-(D-ribitylamino)uracil. Residue arginine 128 coordinates (2S)-2-hydroxy-3-oxobutyl phosphate.

It belongs to the DMRL synthase family. Forms an icosahedral capsid composed of 60 subunits, arranged as a dodecamer of pentamers.

The catalysed reaction is (2S)-2-hydroxy-3-oxobutyl phosphate + 5-amino-6-(D-ribitylamino)uracil = 6,7-dimethyl-8-(1-D-ribityl)lumazine + phosphate + 2 H2O + H(+). Its pathway is cofactor biosynthesis; riboflavin biosynthesis; riboflavin from 2-hydroxy-3-oxobutyl phosphate and 5-amino-6-(D-ribitylamino)uracil: step 1/2. Functionally, catalyzes the formation of 6,7-dimethyl-8-ribityllumazine by condensation of 5-amino-6-(D-ribitylamino)uracil with 3,4-dihydroxy-2-butanone 4-phosphate. This is the penultimate step in the biosynthesis of riboflavin. In Vibrio vulnificus (strain CMCP6), this protein is 6,7-dimethyl-8-ribityllumazine synthase.